Consider the following 96-residue polypeptide: Large ribosomal subunit protein uL23 (96 aa).

Belongs to the universal ribosomal protein uL23 family. In terms of assembly, part of the 50S ribosomal subunit. Contacts protein L29, and trigger factor when it is bound to the ribosome.

Its function is as follows. One of the early assembly proteins it binds 23S rRNA. One of the proteins that surrounds the polypeptide exit tunnel on the outside of the ribosome. Forms the main docking site for trigger factor binding to the ribosome. In Nitratidesulfovibrio vulgaris (strain DSM 19637 / Miyazaki F) (Desulfovibrio vulgaris), this protein is Large ribosomal subunit protein uL23.